The following is a 397-amino-acid chain: MSLVVFPFKHEHPEVLLHNVRVAAAHPRVHEVLCIGYERDQTYEAVERAAPEISRATGTPVSVRLQERLGTLRPGKGDGMNTALRYFLEETQWERIHFYDADITSFGPDWITKAEEAADFGYGLVRHYFPRASTDAMITWMITRTGFALLWPHTELSWIEQPLGGELLMRREVAAMLYEDERVRRRSDWGIDTLYTFVTVQQGVSIYECYIPEGKAHRLYGGLDDLRTMLVECFAAIQSLQHEVVGQPAIHRQEHPHRVPVHIAERVGYDVEATLHRLMQHWTPRQVELLELFTTPVREGLRTCQRRPAFNFMDEMAWAATYHVLLEHFQPGDPDWEELLFKLWTTRVLNYTMTVALRGYDYAQQYLYRMLGRYRYQAALENGRGHPVPPRAALSTA.

Residues 7–11, isoleucine 35, glutamine 66, lysine 76, aspartate 100, and 100–101 contribute to the GDP-alpha-D-mannose site; these read PFKHE and DA. Aspartate 102 contacts a divalent metal cation. (R)-glycerate is bound by residues arginine 131 and 136–139; that span reads AMIT. Leucine 163 and aspartate 192 together coordinate GDP-alpha-D-mannose. Histidine 217 is an a divalent metal cation binding site. GDP-alpha-D-mannose is bound by residues arginine 218 and tyrosine 220.

This sequence belongs to the glycosyltransferase 78 family. Homotetramer. Dimer of dimers. Mg(2+) is required as a cofactor. The cofactor is Ca(2+). It depends on Mn(2+) as a cofactor. Requires Ni(2+) as cofactor. Co(2+) serves as cofactor.

The enzyme catalyses (R)-glycerate + GDP-alpha-D-mannose = (2R)-2-O-(alpha-D-mannosyl)-glycerate + GDP + H(+). Its activity is regulated as follows. Inhibited by GDP. Involved in the biosynthesis of the stress protectant 2-O-alpha-D-mannosyl glycerate (MG) which is produced in response to growth at supraoptimal temperature and salinity, and protects several enzymes against inactivation by temperature, freeze-drying and osmotic stress. Catalyzes the condensation of alpha-GDP-D-mannose (GDP-Man) with D-glycerate to produce alpha-mannosyl-D-glycerate. It is specific for GDP-Man, but it can also use alpha-GDP-D-glucose (GDP-Glc), beta-GDP-D-fructose, alpha-UDP-D-mannose and alpha-UDP-D-glucose as sugar donors. It is specific for D-glycerate, but it can also use D-lactate and glycolate as sugar acceptors. This reaction occurs with a net retention of anomeric configuration; the newly formed glycosidic linkage has the same alpha configuration as the sugar donor. The chain is Mannosylglycerate synthase (mgs) from Rhodothermus marinus (Rhodothermus obamensis).